A 737-amino-acid polypeptide reads, in one-letter code: Polyribonucleotide nucleotidyltransferase (737 aa).

The Mg(2+) site is built by aspartate 489 and aspartate 495. A KH domain is found at 556–615 (PKIDTIKIDVDKIKIVIGKGGETIDKIIAETGVKIDIDEEGNVSIYSSDQDAINRAKEII). The S1 motif domain maps to 625–693 (DEVYRAKVVR…EKGRIDASMK (69 aa)). Residues 691–737 (SMKALLPRPPKPEHDEKGEKSERPHRPRHQKDYKPKKEFTETPKDSE) are disordered. The span at 700–737 (PKPEHDEKGEKSERPHRPRHQKDYKPKKEFTETPKDSE) shows a compositional bias: basic and acidic residues.

The protein belongs to the polyribonucleotide nucleotidyltransferase family. The cofactor is Mg(2+).

The protein localises to the cytoplasm. It catalyses the reaction RNA(n+1) + phosphate = RNA(n) + a ribonucleoside 5'-diphosphate. In terms of biological role, involved in mRNA degradation. Catalyzes the phosphorolysis of single-stranded polyribonucleotides processively in the 3'- to 5'-direction. This chain is Polyribonucleotide nucleotidyltransferase, found in Streptococcus pneumoniae serotype 2 (strain D39 / NCTC 7466).